The following is a 148-amino-acid chain: Receptor activity-modifying protein 1 (148 aa).

An N-terminal signal peptide occupies residues 1–26; the sequence is MVRVLRGLPWRGLWLLLAHQLFLVTA. Disulfide bonds link Cys27-Cys82, Cys40-Cys72, and Cys57-Cys104. Residues 27-118 lie on the Extracellular side of the membrane; it reads CQDAHYGTLM…RALGDPPSTI (92 aa). The helical transmembrane segment at 119–140 threads the bilayer; sequence LCPFVVLPITVTLLVTALVVWR. Over 141-148 the chain is Cytoplasmic; that stretch reads SKRAESIV.

The protein belongs to the RAMP family. As to quaternary structure, heterodimer of CALCRL and RAMP1; the interaction induces allosteric modulation of CALCRL function and CGRP1/CALCA and CGRP2/CALCB ligand specificity. Heterodimer of CALCR and RAMP1; interaction forms the AMYR1 receptor complex for amylin/IAPP and CGRP1/CALCA ligands.

It localises to the cell membrane. In terms of biological role, accessory protein that interacts with and modulates the function of G-protein coupled receptors including calcitonin gene-related peptide type 1 receptor (CALCRL) and calcitonin receptor (CALCR). Required for the transport of CALCRL to the plasma membrane. Together with CALCRL, form the receptor complex for the calcitonin gene-related peptides CGRP1/CALCA and CGRP2/CALCB. Together with CALCR, form the AMYR1 receptor complex for amylin/IAPP and CGRP1/CALCA. In Cavia porcellus (Guinea pig), this protein is Receptor activity-modifying protein 1 (RAMP1).